An 882-amino-acid polypeptide reads, in one-letter code: Alanine--tRNA ligase (882 aa).

Zn(2+) is bound by residues H570, H574, C672, and H676.

The protein belongs to the class-II aminoacyl-tRNA synthetase family. Requires Zn(2+) as cofactor.

It localises to the cytoplasm. The catalysed reaction is tRNA(Ala) + L-alanine + ATP = L-alanyl-tRNA(Ala) + AMP + diphosphate. Its function is as follows. Catalyzes the attachment of alanine to tRNA(Ala) in a two-step reaction: alanine is first activated by ATP to form Ala-AMP and then transferred to the acceptor end of tRNA(Ala). Also edits incorrectly charged Ser-tRNA(Ala) and Gly-tRNA(Ala) via its editing domain. This is Alanine--tRNA ligase from Xanthomonas euvesicatoria pv. vesicatoria (strain 85-10) (Xanthomonas campestris pv. vesicatoria).